A 220-amino-acid polypeptide reads, in one-letter code: Protein GrpE (220 aa).

Composition is skewed to polar residues over residues 1–12 (MEQGDKQATYNE) and 50–63 (AAST…QTSV). Residues 1–67 (MEQGDKQATY…AEQTSVEAEE (67 aa)) are disordered.

This sequence belongs to the GrpE family. In terms of assembly, homodimer.

Its subcellular location is the cytoplasm. In terms of biological role, participates actively in the response to hyperosmotic and heat shock by preventing the aggregation of stress-denatured proteins, in association with DnaK and GrpE. It is the nucleotide exchange factor for DnaK and may function as a thermosensor. Unfolded proteins bind initially to DnaJ; upon interaction with the DnaJ-bound protein, DnaK hydrolyzes its bound ATP, resulting in the formation of a stable complex. GrpE releases ADP from DnaK; ATP binding to DnaK triggers the release of the substrate protein, thus completing the reaction cycle. Several rounds of ATP-dependent interactions between DnaJ, DnaK and GrpE are required for fully efficient folding. In Geobacillus thermodenitrificans (strain NG80-2), this protein is Protein GrpE.